Reading from the N-terminus, the 277-residue chain is 2-dehydro-3-deoxyphosphooctonate aldolase (277 aa).

The protein belongs to the KdsA family.

The protein resides in the cytoplasm. It carries out the reaction D-arabinose 5-phosphate + phosphoenolpyruvate + H2O = 3-deoxy-alpha-D-manno-2-octulosonate-8-phosphate + phosphate. Its pathway is carbohydrate biosynthesis; 3-deoxy-D-manno-octulosonate biosynthesis; 3-deoxy-D-manno-octulosonate from D-ribulose 5-phosphate: step 2/3. It participates in bacterial outer membrane biogenesis; lipopolysaccharide biosynthesis. The chain is 2-dehydro-3-deoxyphosphooctonate aldolase from Syntrophotalea carbinolica (strain DSM 2380 / NBRC 103641 / GraBd1) (Pelobacter carbinolicus).